The sequence spans 182 residues: uncharacterized protein (182 aa).

This is an uncharacterized protein from Haemophilus influenzae (strain ATCC 51907 / DSM 11121 / KW20 / Rd).